A 246-amino-acid polypeptide reads, in one-letter code: uncharacterized protein (246 aa).

Disordered regions lie at residues 9–125 (CSRV…GAMA) and 155–203 (QPVR…EEKA). Residues 27–37 (GTRRQRQRPRQ) are compositionally biased toward basic residues. 2 stretches are compositionally biased toward pro residues: residues 54-64 (PRPPTGPPARY) and 101-117 (EPRPPPESPGAPPPPGS). Residues 161–176 (KLPKGKGRLRRPRQSR) show a composition bias toward basic residues. A Phosphothreonine modification is found at Thr-179. Phosphoserine is present on residues Ser-196, Ser-210, and Ser-220.

It localises to the cytoplasm. This is an uncharacterized protein from Mus musculus (Mouse).